The primary structure comprises 1009 residues: Dihydropyrimidine dehydrogenase [NADP(+)] (1009 aa).

A 4Fe-4S ferredoxin-type 1 domain is found at 69–99; sequence RGALFESARCLKCADAPCQKGCPTQLDIKSF. Positions 78, 81, 86, and 90 each coordinate [4Fe-4S] cluster. Val-128 contributes to the FAD binding site. [4Fe-4S] cluster contacts are provided by Cys-129, Cys-135, Cys-139, and Gln-155. Residues 193 to 197, 217 to 225, Arg-234, and Leu-260 contribute to the FAD site; these read GCGPT and EKEQYLGGL. Residues 339–342, 363–364, Arg-370, 436–438, and 479–484 each bind NADP(+); these read AGDT, RR, AFG, and DLVGNG. FAD is bound at residue 478 to 486; sequence GDLVGNGTT. FMN contacts are provided by residues Ser-548 and 572-573; that span reads KT. Residues Asn-607 and 666–668 each bind substrate; that span reads NLS. Cys-669 serves as the catalytic Proton acceptor. Residue Lys-707 coordinates FMN. Residue 734–735 coordinates substrate; the sequence is NT. FMN contacts are provided by residues Gly-765, 791–793, and 814–815; these read TGG and CS. 2 consecutive 4Fe-4S ferredoxin-type domains span residues 932–964 and 965–995; these read VVALIDEDKCINCGKCYMTCNDSGYQAIKFDGK and THIPLVTDLCTGCDLCLSVCPVPDCITMVPR. Residues Cys-941, Cys-944, Cys-947, Cys-951, Cys-974, Cys-977, Cys-980, and Cys-984 each coordinate [4Fe-4S] cluster.

This sequence belongs to the dihydropyrimidine dehydrogenase family. As to quaternary structure, homodimer. [4Fe-4S] cluster is required as a cofactor. FAD serves as cofactor. The cofactor is FMN.

The protein localises to the cytoplasm. The enzyme catalyses 5,6-dihydrouracil + NADP(+) = uracil + NADPH + H(+). It participates in amino-acid biosynthesis; beta-alanine biosynthesis. In terms of biological role, involved in pyrimidine base degradation. Catalyzes the reduction of uracil and thymine. In Dictyostelium discoideum (Social amoeba), this protein is Dihydropyrimidine dehydrogenase [NADP(+)] (pyd1).